An 84-amino-acid polypeptide reads, in one-letter code: Control protein C.SmaI (84 aa).

The 55-residue stretch at 19-73 folds into the HTH cro/C1-type domain; that stretch reads VRSYRNINNLSQEQLAEISGLHRTYIGSVERKERNVTLSTLIILAKALNTSVPKL. Residues 30-49 constitute a DNA-binding region (H-T-H motif); the sequence is QEQLAEISGLHRTYIGSVER.

In terms of biological role, may control expression of its associated restriction-modification system SmaI. This is Control protein C.SmaI from Serratia marcescens.